The following is a 912-amino-acid chain: Protein translocase subunit SecA (912 aa).

ATP is bound by residues Gln87, 105–109 (GEGKT), and Asp508. The interval 855-912 (QHQDAGGYGADEEVEQMQGGNAPVPVSQVTRDEPKVGRNDPCPCGSGKKYKHCHGQLS) is disordered. Zn(2+) contacts are provided by Cys896, Cys898, Cys907, and His908. Residues 902 to 912 (KKYKHCHGQLS) are compositionally biased toward basic residues.

This sequence belongs to the SecA family. Monomer and homodimer. Part of the essential Sec protein translocation apparatus which comprises SecA, SecYEG and auxiliary proteins SecDF-YajC and YidC. Zn(2+) serves as cofactor.

It is found in the cell inner membrane. The protein resides in the cytoplasm. It carries out the reaction ATP + H2O + cellular proteinSide 1 = ADP + phosphate + cellular proteinSide 2.. In terms of biological role, part of the Sec protein translocase complex. Interacts with the SecYEG preprotein conducting channel. Has a central role in coupling the hydrolysis of ATP to the transfer of proteins into and across the cell membrane, serving both as a receptor for the preprotein-SecB complex and as an ATP-driven molecular motor driving the stepwise translocation of polypeptide chains across the membrane. This Xanthomonas campestris pv. campestris (strain B100) protein is Protein translocase subunit SecA.